The chain runs to 242 residues: ATP synthase subunit b (242 aa).

2 helical membrane-spanning segments follow: residues 8–28 and 87–107; these read VLPFLLVLLFAFAPLALASAP and LMDLFWRVLNFAVLMAILIKF.

This sequence belongs to the ATPase B chain family. In terms of assembly, F-type ATPases have 2 components, F(1) - the catalytic core - and F(0) - the membrane proton channel. F(1) has five subunits: alpha(3), beta(3), gamma(1), delta(1), epsilon(1). F(0) has three main subunits: a(1), b(2) and c(10-14). The alpha and beta chains form an alternating ring which encloses part of the gamma chain. F(1) is attached to F(0) by a central stalk formed by the gamma and epsilon chains, while a peripheral stalk is formed by the delta and b chains.

The protein localises to the cell inner membrane. In terms of biological role, f(1)F(0) ATP synthase produces ATP from ADP in the presence of a proton or sodium gradient. F-type ATPases consist of two structural domains, F(1) containing the extramembraneous catalytic core and F(0) containing the membrane proton channel, linked together by a central stalk and a peripheral stalk. During catalysis, ATP synthesis in the catalytic domain of F(1) is coupled via a rotary mechanism of the central stalk subunits to proton translocation. Functionally, component of the F(0) channel, it forms part of the peripheral stalk, linking F(1) to F(0). The chain is ATP synthase subunit b from Desulfotalea psychrophila (strain LSv54 / DSM 12343).